The primary structure comprises 378 residues: Probable protein phosphatase 2C 55 (378 aa).

2 disordered regions span residues 1 to 59 (MRRH…ASKG) and 79 to 115 (EGEA…GVGC). Residues 7 to 26 (LGLLRRAAASSTSAASSRAG) are compositionally biased toward low complexity. Basic residues predominate over residues 92 to 104 (GGRRGRNSKRQPP). The PPM-type phosphatase domain occupies 122–369 (SWGYSSFQGR…DNVTCIVLQF (248 aa)). Aspartate 158, glycine 159, aspartate 321, and aspartate 360 together coordinate Mn(2+).

This sequence belongs to the PP2C family. The cofactor is Mg(2+). It depends on Mn(2+) as a cofactor.

It carries out the reaction O-phospho-L-seryl-[protein] + H2O = L-seryl-[protein] + phosphate. The enzyme catalyses O-phospho-L-threonyl-[protein] + H2O = L-threonyl-[protein] + phosphate. The chain is Probable protein phosphatase 2C 55 from Oryza sativa subsp. japonica (Rice).